The primary structure comprises 51 residues: Insulin (51 aa).

3 cysteine pairs are disulfide-bonded: Cys7-Cys37, Cys19-Cys50, and Cys36-Cys41.

This sequence belongs to the insulin family. As to quaternary structure, heterodimer of a B chain and an A chain linked by two disulfide bonds.

The protein localises to the secreted. Insulin decreases blood glucose concentration. It increases cell permeability to monosaccharides, amino acids and fatty acids. It accelerates glycolysis, the pentose phosphate cycle, and glycogen synthesis in liver. The protein is Insulin (INS) of Balaenoptera physalus (Fin whale).